Here is a 963-residue protein sequence, read N- to C-terminus: Putative RNA Helicase B962L (963 aa).

The Helicase ATP-binding domain occupies 43–229 (IPTSLADRVL…FGIGKENIIL (187 aa)). ATP is bound at residue 56–63 (SRTGSGKS). The DEAH box motif lies at 167-170 (DEAH). The Helicase C-terminal domain occupies 253–459 (ACETALTIHK…TIKKNKEGVF (207 aa)). A helical transmembrane segment spans residues 521-541 (GYFWQAAISDIAIILAVVSVV).

Belongs to the DEAD box helicase family. DEAH subfamily.

The protein resides in the host membrane. Its subcellular location is the virion. The enzyme catalyses ATP + H2O = ADP + phosphate + H(+). The chain is Putative RNA Helicase B962L from African swine fever virus (isolate Tick/Malawi/Lil 20-1/1983) (ASFV).